A 553-amino-acid chain; its full sequence is Formate--tetrahydrofolate ligase (553 aa).

62-69 (TPAGEGKS) is a binding site for ATP.

It belongs to the formate--tetrahydrofolate ligase family.

It carries out the reaction (6S)-5,6,7,8-tetrahydrofolate + formate + ATP = (6R)-10-formyltetrahydrofolate + ADP + phosphate. Its pathway is one-carbon metabolism; tetrahydrofolate interconversion. The polypeptide is Formate--tetrahydrofolate ligase (Pediococcus pentosaceus (strain ATCC 25745 / CCUG 21536 / LMG 10740 / 183-1w)).